A 188-amino-acid polypeptide reads, in one-letter code: Deoxyuridine 5'-triphosphate nucleotidohydrolase (188 aa).

A disordered region spans residues M1–I34.

It belongs to the dUTPase family. It depends on Mg(2+) as a cofactor.

The enzyme catalyses dUTP + H2O = dUMP + diphosphate + H(+). In terms of biological role, this enzyme is involved in nucleotide metabolism: it produces dUMP, the immediate precursor of thymidine nucleotides and it decreases the intracellular concentration of dUTP so that uracil cannot be incorporated into DNA. The sequence is that of Deoxyuridine 5'-triphosphate nucleotidohydrolase (49) from Ictaluridae (bullhead catfishes).